A 208-amino-acid chain; its full sequence is Ribosomal RNA large subunit methyltransferase E (208 aa).

S-adenosyl-L-methionine is bound by residues glycine 62, tryptophan 64, aspartate 82, aspartate 98, and aspartate 123. Residue lysine 163 is the Proton acceptor of the active site.

This sequence belongs to the class I-like SAM-binding methyltransferase superfamily. RNA methyltransferase RlmE family.

It localises to the cytoplasm. The catalysed reaction is uridine(2552) in 23S rRNA + S-adenosyl-L-methionine = 2'-O-methyluridine(2552) in 23S rRNA + S-adenosyl-L-homocysteine + H(+). Functionally, specifically methylates the uridine in position 2552 of 23S rRNA at the 2'-O position of the ribose in the fully assembled 50S ribosomal subunit. The sequence is that of Ribosomal RNA large subunit methyltransferase E from Glaesserella parasuis serovar 5 (strain SH0165) (Haemophilus parasuis).